Reading from the N-terminus, the 138-residue chain is ATP synthase epsilon chain (138 aa).

This sequence belongs to the ATPase epsilon chain family. F-type ATPases have 2 components, CF(1) - the catalytic core - and CF(0) - the membrane proton channel. CF(1) has five subunits: alpha(3), beta(3), gamma(1), delta(1), epsilon(1). CF(0) has three main subunits: a, b and c.

Its subcellular location is the cell inner membrane. Produces ATP from ADP in the presence of a proton gradient across the membrane. The protein is ATP synthase epsilon chain of Citrifermentans bemidjiense (strain ATCC BAA-1014 / DSM 16622 / JCM 12645 / Bem) (Geobacter bemidjiensis).